Consider the following 170-residue polypeptide: Small ribosomal subunit protein uS5 (170 aa).

The S5 DRBM domain maps to 11–74; the sequence is ILEKLVHINR…ETARRVLIHV (64 aa).

Belongs to the universal ribosomal protein uS5 family. Part of the 30S ribosomal subunit. Contacts proteins S4 and S8.

Functionally, with S4 and S12 plays an important role in translational accuracy. In terms of biological role, located at the back of the 30S subunit body where it stabilizes the conformation of the head with respect to the body. The protein is Small ribosomal subunit protein uS5 of Pelagibacter ubique (strain HTCC1062).